Consider the following 357-residue polypeptide: MTTVSITFDLLSSMQPRKWLKNQNFVGEITSLSFDDSGELCLASCTDDTLQLYNCISGKFVKSLASKKYGAHLGRFTHHSNSLIHASTKEDNTVRYLDVVTNRYLRYFPGHKQTVTSIDVSPADETFLSASLDNTIRLWDLRSPNCQGLLNVSSPVVAAFDATGLIFASVSERKYKISLYNIKSFDARPFQDIPLTFLPPHVRIANVEFSTDGKYLLLTTGNDFHYVIDAYSGSELLRVPSKVSTKTQDGNLTYYASACMSPDSKFLFTSYDNEHLCMYQLPELKQTVNSDHIVNSFTEMGLASTTPTSNSHSTENPLAIIPSSTSKNLLPETPSIVRFNPRFSQLVTAHSGVIFWT.

4 WD repeats span residues 24-65, 110-149, 199-241, and 247-289; these read NFVG…KSLA, GHKQ…CQGL, PPHV…RVPS, and TQDG…QTVN.

This sequence belongs to the WD repeat SWD2 family. Component of the Set1 complex composed of ash2, sdc1, set1, shg1, spp1, swd1, swd2 and swd3.

It is found in the nucleus. Functionally, the Set1 complex specifically methylates 'Lys-4' of histone H3. In Schizosaccharomyces pombe (strain 972 / ATCC 24843) (Fission yeast), this protein is Set1 complex component swd2.